A 419-amino-acid polypeptide reads, in one-letter code: Carbohydrate sulfotransferase 12 (419 aa).

Residues 1–5 (MTKPR) lie on the Cytoplasmic side of the membrane. A helical; Signal-anchor for type II membrane protein membrane pass occupies residues 6–26 (LFRLWLVLGSALMILLIIVYW). The Lumenal portion of the chain corresponds to 27 to 419 (DNVGTAHFYL…YPKPENLLRD (393 aa)). Residues 78-87 (HNDLSRRKTE) are compositionally biased toward basic and acidic residues. The disordered stretch occupies residues 78–99 (HNDLSRRKTEQPPVPAPSKPVL). A glycan (N-linked (GlcNAc...) asparagine) is linked at asparagine 139. Position 176–182 (176–182 (PKVACTN)) interacts with 3'-phosphoadenylyl sulfate. N-linked (GlcNAc...) asparagine glycosylation occurs at asparagine 214. 250 to 258 (RDPFVRLIS) is a binding site for 3'-phosphoadenylyl sulfate. N-linked (GlcNAc...) asparagine glycans are attached at residues asparagine 285 and asparagine 375.

The protein belongs to the sulfotransferase 2 family.

It is found in the golgi apparatus membrane. It catalyses the reaction chondroitin beta-D-glucuronate + n 3'-phosphoadenylyl sulfate = chondroitin 4'-sulfate + n adenosine 3',5'-bisphosphate + n H(+). Functionally, catalyzes the transfer of sulfate to position 4 of the N-acetylgalactosamine (GalNAc) residue of chondroitin and desulfated dermatan sulfate. Chondroitin sulfate constitutes the predominant proteoglycan present in cartilage and is distributed on the surfaces of many cells and extracellular matrices. Activity toward partially desulfated dermatan sulfate is however lower. Does not form 4, 6-di-O-sulfated GalNAc when chondroitin sulfate C is used as an acceptor. This Mus musculus (Mouse) protein is Carbohydrate sulfotransferase 12 (Chst12).